The primary structure comprises 131 residues: NADPH-dependent 7-cyano-7-deazaguanine reductase (131 aa).

The active-site Thioimide intermediate is cysteine 48. The active-site Proton donor is the aspartate 55. Substrate contacts are provided by residues 70 to 72 (VEL) and 89 to 90 (QE).

Belongs to the GTP cyclohydrolase I family. QueF type 1 subfamily.

It is found in the cytoplasm. The catalysed reaction is 7-aminomethyl-7-carbaguanine + 2 NADP(+) = 7-cyano-7-deazaguanine + 2 NADPH + 3 H(+). It participates in tRNA modification; tRNA-queuosine biosynthesis. Catalyzes the NADPH-dependent reduction of 7-cyano-7-deazaguanine (preQ0) to 7-aminomethyl-7-deazaguanine (preQ1). The chain is NADPH-dependent 7-cyano-7-deazaguanine reductase from Caldicellulosiruptor bescii (strain ATCC BAA-1888 / DSM 6725 / KCTC 15123 / Z-1320) (Anaerocellum thermophilum).